Consider the following 180-residue polypeptide: Shikimate kinase (180 aa).

An ATP-binding site is contributed by 14-19 (GAGKSC). Position 18 (serine 18) interacts with Mg(2+). Aspartate 36, arginine 60, and glycine 82 together coordinate substrate. Position 120 (arginine 120) interacts with ATP. Arginine 139 is a substrate binding site.

This sequence belongs to the shikimate kinase family. As to quaternary structure, monomer. Mg(2+) is required as a cofactor.

Its subcellular location is the cytoplasm. The catalysed reaction is shikimate + ATP = 3-phosphoshikimate + ADP + H(+). The protein operates within metabolic intermediate biosynthesis; chorismate biosynthesis; chorismate from D-erythrose 4-phosphate and phosphoenolpyruvate: step 5/7. Catalyzes the specific phosphorylation of the 3-hydroxyl group of shikimic acid using ATP as a cosubstrate. This chain is Shikimate kinase, found in Xanthomonas oryzae pv. oryzae (strain PXO99A).